Consider the following 161-residue polypeptide: Protein PLANT CADMIUM RESISTANCE 12 (161 aa).

A helical membrane pass occupies residues Ala-71 to Phe-89.

This sequence belongs to the cornifelin family.

Its subcellular location is the membrane. Its function is as follows. May be involved in heavy metals transport. This chain is Protein PLANT CADMIUM RESISTANCE 12 (PCR12), found in Arabidopsis thaliana (Mouse-ear cress).